A 340-amino-acid polypeptide reads, in one-letter code: CaiB/baiF CoA-transferase family protein ZK892.4 (340 aa).

Asp-154 functions as the Nucleophile in the catalytic mechanism.

It belongs to the CoA-transferase III family.

The protein is CaiB/baiF CoA-transferase family protein ZK892.4 of Caenorhabditis elegans.